The primary structure comprises 292 residues: N-acetylneuraminate lyase (292 aa).

Ser-47 and Thr-48 together coordinate aceneuramate. Tyr-136 (proton donor) is an active-site residue. Residue Lys-164 is the Schiff-base intermediate with substrate of the active site. 5 residues coordinate aceneuramate: Thr-166, Gly-188, Asp-190, Glu-191, and Ser-207.

This sequence belongs to the DapA family. NanA subfamily. Homotetramer.

The protein resides in the cytoplasm. The catalysed reaction is aceneuramate = aldehydo-N-acetyl-D-mannosamine + pyruvate. The protein operates within amino-sugar metabolism; N-acetylneuraminate degradation; D-fructose 6-phosphate from N-acetylneuraminate: step 1/5. Catalyzes the reversible aldol cleavage of N-acetylneuraminic acid (sialic acid; Neu5Ac) to form pyruvate and N-acetylmannosamine (ManNAc) via a Schiff base intermediate. The protein is N-acetylneuraminate lyase of Actinobacillus pleuropneumoniae serotype 5b (strain L20).